A 339-amino-acid polypeptide reads, in one-letter code: Fructose-1,6-bisphosphatase, cytosolic (339 aa).

5 residues coordinate Mg(2+): E71, E100, D121, L123, and D124. Residues 124-127 (DGSS), N215, Y247, Y267, and K277 each bind substrate. E283 provides a ligand contact to Mg(2+).

This sequence belongs to the FBPase class 1 family. The cofactor is Mg(2+).

The protein localises to the cytoplasm. It catalyses the reaction beta-D-fructose 1,6-bisphosphate + H2O = beta-D-fructose 6-phosphate + phosphate. This is Fructose-1,6-bisphosphatase, cytosolic from Oryza sativa subsp. indica (Rice).